Reading from the N-terminus, the 100-residue chain is Small ribosomal subunit protein uS14c (100 aa).

Belongs to the universal ribosomal protein uS14 family. In terms of assembly, part of the 30S ribosomal subunit.

It is found in the plastid. Its subcellular location is the chloroplast. Functionally, binds 16S rRNA, required for the assembly of 30S particles. This Illicium oligandrum (Star anise) protein is Small ribosomal subunit protein uS14c.